The primary structure comprises 284 residues: Bifunctional protein FolD (284 aa).

NADP(+)-binding positions include 166–168 (GAS) and Ile-232.

This sequence belongs to the tetrahydrofolate dehydrogenase/cyclohydrolase family. Homodimer.

It carries out the reaction (6R)-5,10-methylene-5,6,7,8-tetrahydrofolate + NADP(+) = (6R)-5,10-methenyltetrahydrofolate + NADPH. It catalyses the reaction (6R)-5,10-methenyltetrahydrofolate + H2O = (6R)-10-formyltetrahydrofolate + H(+). It participates in one-carbon metabolism; tetrahydrofolate interconversion. Functionally, catalyzes the oxidation of 5,10-methylenetetrahydrofolate to 5,10-methenyltetrahydrofolate and then the hydrolysis of 5,10-methenyltetrahydrofolate to 10-formyltetrahydrofolate. In Alteromonas mediterranea (strain DSM 17117 / CIP 110805 / LMG 28347 / Deep ecotype), this protein is Bifunctional protein FolD.